The sequence spans 142 residues: Large ribosomal subunit protein uL13 (142 aa).

This sequence belongs to the universal ribosomal protein uL13 family. Part of the 50S ribosomal subunit.

In terms of biological role, this protein is one of the early assembly proteins of the 50S ribosomal subunit, although it is not seen to bind rRNA by itself. It is important during the early stages of 50S assembly. The protein is Large ribosomal subunit protein uL13 of Nitrosococcus oceani (strain ATCC 19707 / BCRC 17464 / JCM 30415 / NCIMB 11848 / C-107).